Here is an 85-residue protein sequence, read N- to C-terminus: MAKGQSLQDPFLNALRRERIPVSIYLVNGIKLQGQVESFDQFVILLKNTVSQMVYKHAISTVVPARPVAHHTAPAAGDSDSQSEE.

The region spanning aspartate 9 to valine 68 is the Sm domain.

The protein belongs to the Hfq family. As to quaternary structure, homohexamer.

Its function is as follows. RNA chaperone that binds small regulatory RNA (sRNAs) and mRNAs to facilitate mRNA translational regulation in response to envelope stress, environmental stress and changes in metabolite concentrations. Also binds with high specificity to tRNAs. This is RNA-binding protein Hfq from Tolumonas auensis (strain DSM 9187 / NBRC 110442 / TA 4).